A 587-amino-acid chain; its full sequence is Glucosylglycerate phosphorylase (587 aa).

The active-site Nucleophile is D236.

This sequence belongs to the glycosyl hydrolase 13 family. Glucosylglycerate phosphorylase subfamily.

It carries out the reaction (2R)-2-O-(alpha-D-glucopyranosyl)-glycerate + phosphate = (R)-glycerate + alpha-D-glucose 1-phosphate. Functionally, catalyzes the reversible phosphorolysis of glucosylglycerate into alpha-D-glucose 1-phosphate (Glc1P) and D-glycerate. May be a regulator of intracellular levels of glucosylglycerate, a compatible solute that primarily protects organisms facing salt stress and very specific nutritional constraints. Cannot catalyze the phosphorolysis of sucrose. This is Glucosylglycerate phosphorylase from Spirochaeta thermophila (strain ATCC 700085 / DSM 6578 / Z-1203).